A 510-amino-acid polypeptide reads, in one-letter code: Nectin-4 (510 aa).

Positions 1–31 are cleaved as a signal peptide; sequence MPLSLGAEMWGPAAWLLLLLLLASFTGQRLA. The region spanning 32–144 is the Ig-like V-type domain; it reads GELETSDLVT…GSFQARLRLR (113 aa). Topologically, residues 32–349 are extracellular; it reads GELETSDLVT…GKQVDLVSAS (318 aa). Disulfide bonds link Cys52-Cys127, Cys171-Cys223, and Cys270-Cys315. Ig-like C2-type domains are found at residues 148–237 and 248–331; these read PPLP…QRIT and ASVR…VVVD. Asn281 carries an N-linked (GlcNAc...) asparagine glycan. A helical membrane pass occupies residues 350-370; the sequence is VVVVGVIAALLFCLLVVVVVL. Over 371-510 the chain is Cytoplasmic; it reads MSRYHRRKAQ…IYINGRGHLV (140 aa). Basic and acidic residues predominate over residues 400-412; that stretch reads RLHSHHSDPRNQP. The segment at 400–475 is disordered; that stretch reads RLHSHHSDPR…GRAEEEEDRD (76 aa).

This sequence belongs to the nectin family. Self-associates. Interacts via its Ig-like V-type domain with NECTIN1 Ig-like V-type domain. Interacts via its C-terminus with AFDN. Interacts with TIGIT.

The protein localises to the cell membrane. The protein resides in the cell junction. Its subcellular location is the adherens junction. Seems to be involved in cell adhesion through trans-homophilic and -heterophilic interactions, the latter including specifically interactions with NECTIN1. Plays a role in the senescence-associated cell size enlargement via SFK/PI3K/Rac1 and thus promotes senescent cell survival. Also participates in the innate immune response by acting as a ligand for the receptor TIGIT to inhibit NK-cell activity. The chain is Nectin-4 from Bos taurus (Bovine).